The primary structure comprises 557 residues: Dihydroxy-acid dehydratase (557 aa).

A [2Fe-2S] cluster-binding site is contributed by Cys50. A Mg(2+)-binding site is contributed by Asp82. Cys123 is a [2Fe-2S] cluster binding site. Residues Asp124 and Lys125 each coordinate Mg(2+). Lys125 carries the N6-carboxylysine modification. [2Fe-2S] cluster is bound at residue Cys195. Position 447 (Glu447) interacts with Mg(2+). Catalysis depends on Ser473, which acts as the Proton acceptor.

Belongs to the IlvD/Edd family. As to quaternary structure, homodimer. The cofactor is [2Fe-2S] cluster. Mg(2+) serves as cofactor.

It catalyses the reaction (2R)-2,3-dihydroxy-3-methylbutanoate = 3-methyl-2-oxobutanoate + H2O. It carries out the reaction (2R,3R)-2,3-dihydroxy-3-methylpentanoate = (S)-3-methyl-2-oxopentanoate + H2O. It functions in the pathway amino-acid biosynthesis; L-isoleucine biosynthesis; L-isoleucine from 2-oxobutanoate: step 3/4. The protein operates within amino-acid biosynthesis; L-valine biosynthesis; L-valine from pyruvate: step 3/4. In terms of biological role, functions in the biosynthesis of branched-chain amino acids. Catalyzes the dehydration of (2R,3R)-2,3-dihydroxy-3-methylpentanoate (2,3-dihydroxy-3-methylvalerate) into 2-oxo-3-methylpentanoate (2-oxo-3-methylvalerate) and of (2R)-2,3-dihydroxy-3-methylbutanoate (2,3-dihydroxyisovalerate) into 2-oxo-3-methylbutanoate (2-oxoisovalerate), the penultimate precursor to L-isoleucine and L-valine, respectively. The polypeptide is Dihydroxy-acid dehydratase (Burkholderia thailandensis (strain ATCC 700388 / DSM 13276 / CCUG 48851 / CIP 106301 / E264)).